The primary structure comprises 355 residues: Histidinol-phosphate aminotransferase (355 aa).

Lys218 bears the N6-(pyridoxal phosphate)lysine mark.

This sequence belongs to the class-II pyridoxal-phosphate-dependent aminotransferase family. Histidinol-phosphate aminotransferase subfamily. Homodimer. Pyridoxal 5'-phosphate serves as cofactor.

The catalysed reaction is L-histidinol phosphate + 2-oxoglutarate = 3-(imidazol-4-yl)-2-oxopropyl phosphate + L-glutamate. The protein operates within amino-acid biosynthesis; L-histidine biosynthesis; L-histidine from 5-phospho-alpha-D-ribose 1-diphosphate: step 7/9. The sequence is that of Histidinol-phosphate aminotransferase from Pelodictyon phaeoclathratiforme (strain DSM 5477 / BU-1).